The chain runs to 483 residues: UDP-N-acetylmuramoyl-L-alanyl-D-glutamate--2,6-diaminopimelate ligase (483 aa).

Residue serine 29 participates in UDP-N-acetyl-alpha-D-muramoyl-L-alanyl-D-glutamate binding. 107-113 (GTSGKTS) contributes to the ATP binding site. UDP-N-acetyl-alpha-D-muramoyl-L-alanyl-D-glutamate-binding positions include 149 to 150 (TT), serine 176, glutamine 182, and arginine 184. Lysine 216 bears the N6-carboxylysine mark. Meso-2,6-diaminopimelate contacts are provided by residues arginine 380, 404 to 407 (DNPR), glycine 452, and glutamate 456. Positions 404–407 (DNPR) match the Meso-diaminopimelate recognition motif motif.

It belongs to the MurCDEF family. MurE subfamily. Requires Mg(2+) as cofactor. In terms of processing, carboxylation is probably crucial for Mg(2+) binding and, consequently, for the gamma-phosphate positioning of ATP.

The protein localises to the cytoplasm. The enzyme catalyses UDP-N-acetyl-alpha-D-muramoyl-L-alanyl-D-glutamate + meso-2,6-diaminopimelate + ATP = UDP-N-acetyl-alpha-D-muramoyl-L-alanyl-gamma-D-glutamyl-meso-2,6-diaminopimelate + ADP + phosphate + H(+). It participates in cell wall biogenesis; peptidoglycan biosynthesis. In terms of biological role, catalyzes the addition of meso-diaminopimelic acid to the nucleotide precursor UDP-N-acetylmuramoyl-L-alanyl-D-glutamate (UMAG) in the biosynthesis of bacterial cell-wall peptidoglycan. The sequence is that of UDP-N-acetylmuramoyl-L-alanyl-D-glutamate--2,6-diaminopimelate ligase from Chelativorans sp. (strain BNC1).